An 853-amino-acid polypeptide reads, in one-letter code: Dynein axonemal assembly factor 5 (853 aa).

At alanine 2 the chain carries N-acetylalanine. HEAT repeat units follow at residues 69–107, 200–238, 240–276, 278–316, 374–412, 597–636, 694–732, 736–774, and 782–820; these read GPWARLLLPRLLRLLSDPAEGCRALAAHLLDLGLRRAAR, HMQSESLIGPLMQTISHQHWKVRVAVIEATGTVIQFGSG, SVDDVLSHFAQRLFDDVPQVRQAVTSVVGGWLLNLRD, YSFLHKLTPLLLSSFSDEMPEIRQTATSLWEKVGLQWQQ, RVKAAQLLPVLLLHAEDHITQHLEIVLRTLHQACTDEEK, GEALQHVIPTLRACLQPSTDPHMRLKLFSILSMMLLRPKD, QEAQETLMPQVLATLEDDSQTTRLMSCRIINMFLKNSGD, PEKFLKVYPELLKRLDDVSNDVRMAAASALLTWLKCIES, and QSSVQFLYRELLVHLDDPESAIQDTVLEVLKEGSVLFPD.

It belongs to the DNAAF5 family. In terms of assembly, interacts with DNAI2; probably involved in outer arm dynein assembly. As to expression, expressed in ciliated cells including ependymal cells lining the lateral ventricles and multiciliated epithelium of oviduct ampulla.

The protein localises to the cytoplasm. It is found in the cytoplasmic granule. In terms of biological role, cytoplasmic protein involved in the delivery of the dynein machinery to the motile cilium. It is required for the assembly of the axonemal dynein inner and outer arms, two structures attached to the peripheral outer doublet A microtubule of the axoneme, that play a crucial role in cilium motility. The sequence is that of Dynein axonemal assembly factor 5 from Mus musculus (Mouse).